A 404-amino-acid polypeptide reads, in one-letter code: Subtilisin-like proteinase Mp1 (404 aa).

A signal peptide spans 1–19 (MVGFKTLALHLAAVLPALA). Positions 20-112 (APVDKQATQV…VEPDQVWDLY (93 aa)) are excised as a propeptide. The 79-residue stretch at 33–111 (SYIITLKQGA…FVEPDQVWDL (79 aa)) folds into the Inhibitor I9 domain. In terms of domain architecture, Peptidase S8 spans 121 to 404 (PWGLGSISHR…NLIAFNGVTA (284 aa)). Residue N133 is glycosylated (N-linked (GlcNAc...) asparagine). Active-site charge relay system residues include D154, H186, and S347.

Belongs to the peptidase S8 family.

The protein localises to the secreted. This is Subtilisin-like proteinase Mp1 from Magnaporthiopsis poae (Kentucky bluegrass fungus).